The sequence spans 122 residues: MIKLRLKRFGKKREASFRLVACNSTSRRDGRPLQELGFYNPRTKETRLDTEALRLRLSQGAQPTDAVRSLLEKGGLIEKTVRPAEVVGKAKQAEARKAAAKNVAKQAAEAKAEETPADNTEA.

The protein belongs to the bacterial ribosomal protein bS16 family.

This Prochlorococcus marinus (strain MIT 9313) protein is Small ribosomal subunit protein bS16.